We begin with the raw amino-acid sequence, 265 residues long: 4-hydroxy-tetrahydrodipicolinate reductase (265 aa).

9-14 is an NAD(+) binding site; that stretch reads GARGKM. Lys37 serves as a coordination point for NADP(+). Residues 99-101 and 125-128 contribute to the NAD(+) site; these read GTT and APNF. The Proton donor/acceptor role is filled by His155. Residue His156 coordinates (S)-2,3,4,5-tetrahydrodipicolinate. The active-site Proton donor is Lys159. Residue 165-166 coordinates (S)-2,3,4,5-tetrahydrodipicolinate; sequence GT.

The protein belongs to the DapB family.

It localises to the cytoplasm. The catalysed reaction is (S)-2,3,4,5-tetrahydrodipicolinate + NAD(+) + H2O = (2S,4S)-4-hydroxy-2,3,4,5-tetrahydrodipicolinate + NADH + H(+). It carries out the reaction (S)-2,3,4,5-tetrahydrodipicolinate + NADP(+) + H2O = (2S,4S)-4-hydroxy-2,3,4,5-tetrahydrodipicolinate + NADPH + H(+). The protein operates within amino-acid biosynthesis; L-lysine biosynthesis via DAP pathway; (S)-tetrahydrodipicolinate from L-aspartate: step 4/4. Its function is as follows. Catalyzes the conversion of 4-hydroxy-tetrahydrodipicolinate (HTPA) to tetrahydrodipicolinate. The sequence is that of 4-hydroxy-tetrahydrodipicolinate reductase from Lysinibacillus sphaericus (strain C3-41).